Consider the following 252-residue polypeptide: Hydroxyacylglutathione hydrolase (252 aa).

Residues His54, His56, Asp58, His59, His111, Asp128, and His166 each contribute to the Zn(2+) site.

This sequence belongs to the metallo-beta-lactamase superfamily. Glyoxalase II family. Monomer. Zn(2+) is required as a cofactor.

The enzyme catalyses an S-(2-hydroxyacyl)glutathione + H2O = a 2-hydroxy carboxylate + glutathione + H(+). It functions in the pathway secondary metabolite metabolism; methylglyoxal degradation; (R)-lactate from methylglyoxal: step 2/2. Functionally, thiolesterase that catalyzes the hydrolysis of S-D-lactoyl-glutathione to form glutathione and D-lactic acid. In Aliivibrio salmonicida (strain LFI1238) (Vibrio salmonicida (strain LFI1238)), this protein is Hydroxyacylglutathione hydrolase.